The following is a 140-amino-acid chain: 3-hydroxyacyl-[acyl-carrier-protein] dehydratase FabZ (140 aa).

His-47 is a catalytic residue.

Belongs to the thioester dehydratase family. FabZ subfamily.

The protein localises to the cytoplasm. It carries out the reaction a (3R)-hydroxyacyl-[ACP] = a (2E)-enoyl-[ACP] + H2O. Involved in unsaturated fatty acids biosynthesis. Catalyzes the dehydration of short chain beta-hydroxyacyl-ACPs and long chain saturated and unsaturated beta-hydroxyacyl-ACPs. The polypeptide is 3-hydroxyacyl-[acyl-carrier-protein] dehydratase FabZ (Streptococcus equi subsp. equi (strain 4047)).